The following is a 44-amino-acid chain: Photosystem I reaction center subunit IX (44 aa).

A helical transmembrane segment spans residues 7-27; the sequence is YLSTAPVLATLWFGSLAGLLI.

The protein belongs to the PsaJ family.

The protein localises to the plastid. It localises to the chloroplast thylakoid membrane. May help in the organization of the PsaE and PsaF subunits. The polypeptide is Photosystem I reaction center subunit IX (Cycas taitungensis (Prince sago)).